A 1077-amino-acid chain; its full sequence is Carbamoyl phosphate synthase large chain (1077 aa).

Positions 1-403 (MPKRTDIQSI…SLHKALRGLE (403 aa)) are carboxyphosphate synthetic domain. Residues Arg-129, Arg-169, Gly-175, Gly-176, Glu-208, Leu-210, Glu-215, Gly-241, Ile-242, His-243, Gln-285, and Glu-299 each contribute to the ATP site. In terms of domain architecture, ATP-grasp 1 spans 133–328 (DKAMKSIGLE…IAKIAAKLAV (196 aa)). 3 residues coordinate Mg(2+): Gln-285, Glu-299, and Asn-301. The Mn(2+) site is built by Gln-285, Glu-299, and Asn-301. The oligomerization domain stretch occupies residues 404 to 553 (VGATGFDEMV…YSSYDDECEA (150 aa)). The tract at residues 554 to 935 (NPTDKEKIMV…AYAKAELGCG (382 aa)) is carbamoyl phosphate synthetic domain. The ATP-grasp 2 domain occupies 678–869 (QQAVDRLGLL…LAKIAARVMA (192 aa)). Arg-714, Arg-753, Leu-755, Glu-760, Gly-785, Val-786, His-787, Ser-788, Gln-828, and Glu-840 together coordinate ATP. Mg(2+) is bound by residues Gln-828, Glu-840, and Asn-842. Positions 828, 840, and 842 each coordinate Mn(2+). Residues 936–1077 (NVYPEGGRAL…HAQVQASLKA (142 aa)) form the MGS-like domain. An allosteric domain region spans residues 936–1077 (NVYPEGGRAL…HAQVQASLKA (142 aa)).

Belongs to the CarB family. As to quaternary structure, composed of two chains; the small (or glutamine) chain promotes the hydrolysis of glutamine to ammonia, which is used by the large (or ammonia) chain to synthesize carbamoyl phosphate. Tetramer of heterodimers (alpha,beta)4. It depends on Mg(2+) as a cofactor. The cofactor is Mn(2+).

The catalysed reaction is hydrogencarbonate + L-glutamine + 2 ATP + H2O = carbamoyl phosphate + L-glutamate + 2 ADP + phosphate + 2 H(+). It carries out the reaction hydrogencarbonate + NH4(+) + 2 ATP = carbamoyl phosphate + 2 ADP + phosphate + 2 H(+). Its pathway is amino-acid biosynthesis; L-arginine biosynthesis; carbamoyl phosphate from bicarbonate: step 1/1. It functions in the pathway pyrimidine metabolism; UMP biosynthesis via de novo pathway; (S)-dihydroorotate from bicarbonate: step 1/3. In terms of biological role, large subunit of the glutamine-dependent carbamoyl phosphate synthetase (CPSase). CPSase catalyzes the formation of carbamoyl phosphate from the ammonia moiety of glutamine, carbonate, and phosphate donated by ATP, constituting the first step of 2 biosynthetic pathways, one leading to arginine and/or urea and the other to pyrimidine nucleotides. The large subunit (synthetase) binds the substrates ammonia (free or transferred from glutamine from the small subunit), hydrogencarbonate and ATP and carries out an ATP-coupled ligase reaction, activating hydrogencarbonate by forming carboxy phosphate which reacts with ammonia to form carbamoyl phosphate. The protein is Carbamoyl phosphate synthase large chain of Vibrio vulnificus (strain CMCP6).